Reading from the N-terminus, the 262-residue chain is Hydroxyethylthiazole kinase (262 aa).

M50 contributes to the substrate binding site. Residues R125 and T171 each coordinate ATP. G198 lines the substrate pocket.

It belongs to the Thz kinase family. The cofactor is Mg(2+).

It carries out the reaction 5-(2-hydroxyethyl)-4-methylthiazole + ATP = 4-methyl-5-(2-phosphooxyethyl)-thiazole + ADP + H(+). It participates in cofactor biosynthesis; thiamine diphosphate biosynthesis; 4-methyl-5-(2-phosphoethyl)-thiazole from 5-(2-hydroxyethyl)-4-methylthiazole: step 1/1. Its function is as follows. Catalyzes the phosphorylation of the hydroxyl group of 4-methyl-5-beta-hydroxyethylthiazole (THZ). The polypeptide is Hydroxyethylthiazole kinase (Shigella sonnei (strain Ss046)).